The primary structure comprises 1177 residues: Putative ATP-dependent RNA helicase TDRD12 (1177 aa).

A Tudor 1 domain is found at 56–118 (TLEEGQVCVV…RVVVESFMQL (63 aa)). Residues 447–635 (WPPIARGCDV…KEFMNDPYIV (189 aa)) form the Helicase ATP-binding domain. 460-467 (SHCESNPL) lines the ATP pocket. Residues 574 to 577 (DEVE) carry the DEAH box motif. Residues 900-999 (IVDKHMDLYA…HTLPPQAVEF (100 aa)) enclose the Tudor 2 domain. The interval 1098-1177 (EESLSQTPPR…VFKRWLSSNR (80 aa)) is disordered. Positions 1100-1115 (SLSQTPPRVTGTSPAQ) are enriched in polar residues.

As to quaternary structure, component of a mRNP complex containing PIWIL2, TDRD1 and piRNAs. Component of the PET complex, at least composed of EXD1, PIWIL2, TDRD12 and piRNAs.

The catalysed reaction is ATP + H2O = ADP + phosphate + H(+). Probable ATP-binding RNA helicase required during spermatogenesis to repress transposable elements and preventing their mobilization, which is essential for the germline integrity. Acts via the piRNA metabolic process, which mediates the repression of transposable elements during meiosis by forming complexes composed of piRNAs and Piwi proteins and governs the methylation and subsequent repression of transposons. Involved in the secondary piRNAs metabolic process. Acts via the PET complex, a multiprotein complex required during the secondary piRNAs metabolic process for the PIWIL2 slicing-triggered loading of PIWIL4 piRNAs. The protein is Putative ATP-dependent RNA helicase TDRD12 (TDRD12) of Homo sapiens (Human).